Reading from the N-terminus, the 540-residue chain is Early growth response protein 1 (540 aa).

Disordered stretches follow at residues 1-105 (MAAA…AESF) and 162-240 (VSMT…PAYP). Over residues 64 to 75 (SSGGGGGGGGGS) the composition is skewed to gly residues. The span at 167–190 (PPATSSSASSPAASSSASQSPPLS) shows a compositional bias: low complexity. The span at 192-201 (AVQSNDSSPI) shows a compositional bias: polar residues. Residue Lys304 forms a Glycyl lysine isopeptide (Lys-Gly) (interchain with G-Cter in SUMO2) linkage. Residues 317–337 (PSRMRKYPNRPSKTPPHERPY) form a disordered region. Residues 337–361 (YACPVESCDRRFSRSDELTRHIRIH) form a C2H2-type 1 zinc finger. The C2H2-type 2; degenerate zinc finger occupies 366 to 388 (PQCRISMRNFSRSDHLTTHIRTH). A C2H2-type 3 zinc finger spans residues 394-416 (FACDICGRKFARSDERKRHTKIH). Residues 407 to 482 (DERKRHTKIH…SPGSSTYPSP (76 aa)) form a disordered region. Residues 411–421 (RHTKIHLRQKD) show a composition bias toward basic residues. A compositionally biased stretch (low complexity) spans 427-482 (SAASAATSSLPSYPSPVATSYPSPATTSYPSPATTSYPSPVPTSYSSPGSSTYPSP).

The protein belongs to the EGR C2H2-type zinc-finger protein family. As to quaternary structure, interacts with SNAI1 and SP1 upon 12-O-tetradecanoylphorbol-13-acetate (TPA) induction.

The protein resides in the nucleus. It localises to the cytoplasm. Transcriptional regulator. Recognizes and binds to the DNA sequence 5'-GCG(T/G)GGGCG-3'(EGR-site) in the promoter region of target genes. Binds double-stranded target DNA, irrespective of the cytosine methylation status. Regulates the transcription of numerous target genes, and thereby plays an important role in regulating the response to growth factors, DNA damage, and ischemia. Plays a role in the regulation of cell survival, proliferation and cell death. Activates expression of p53/TP53 and TGFB1, and thereby helps prevent tumor formation. Required for normal progress through mitosis and normal proliferation of hepatocytes after partial hepatectomy. Mediates responses to ischemia and hypoxia; regulates the expression of proteins such as IL1B and CXCL2 that are involved in inflammatory processes and development of tissue damage after ischemia. Regulates biosynthesis of luteinizing hormone (LHB) in the pituitary. Regulates the amplitude of the expression rhythms of clock genes: BMAL1, PER2 and NR1D1 in the liver via the activation of PER1 (clock repressor) transcription. Regulates the rhythmic expression of core-clock gene BMAL1 in the suprachiasmatic nucleus (SCN). In Bos taurus (Bovine), this protein is Early growth response protein 1 (EGR1).